We begin with the raw amino-acid sequence, 805 residues long: Polycystin-2-like protein 1 (805 aa).

A disordered region spans residues 1–59 (MNAVGSPEGQELQKLGSGAWDNPAYSGPPSPHGTLRVCTISSTGPLQPQPKKPEDEPQE). Residues 1-103 (MNAVGSPEGQ…ELYIKTTLRE (103 aa)) are Cytoplasmic-facing. A lipid anchor (S-palmitoyl cysteine) is attached at Cys-38. A helical transmembrane segment spans residues 104–124 (LLVYIVFLVDICLLTYGMTSS). The Extracellular segment spans residues 125–356 (SAYYYTKVMS…NWDFFIVGCE (232 aa)). N-linked (GlcNAc...) asparagine glycans are attached at residues Asn-177 and Asn-207. A disulfide bond links Cys-210 and Cys-223. Asn-241 carries an N-linked (GlcNAc...) asparagine glycan. A helical transmembrane segment spans residues 357 to 376 (VIFCVFIFYYVVEEILELHI). Residues Glu-370 and Glu-373 each coordinate Ca(2+). Topologically, residues 377–384 (HRLRYLSS) are cytoplasmic. The helical transmembrane segment at 385-405 (IWNILDLVVILLSIVAVGFHI) threads the bilayer. Ca(2+)-binding residues include Asn-387 and Asp-390. Residues 406-433 (FRTLEVNRLMGKLLQQPNTYADFEFLAF) are Extracellular-facing. A helical transmembrane segment spans residues 434-454 (WQTQYNNMNAVNLFFAWIKIF). Residues 455-479 (KYISFNKTMTQLSSTLARCAKDILG) are Cytoplasmic-facing. The helical transmembrane segment at 480–499 (FAVMFFIVFFAYAQLGYLLF) threads the bilayer. Topologically, residues 500-511 (GTQVENFSTFIK) are extracellular. N-linked (GlcNAc...) asparagine glycosylation is present at Asn-505. Residues 512–526 (CIFTQFRIILGDFDY) constitute an intramembrane region (pore-forming). At 527-536 (NAIDNANRIL) the chain is on the extracellular side. The chain crosses the membrane as a helical span at residues 537-557 (GPAYFVTYVFFVFFVLLNMFL). The Cytoplasmic segment spans residues 558–805 (AIINDTYSEV…RGEIPTLQRS (248 aa)). In terms of domain architecture, EF-hand spans 633–668 (HEITELTATFTKFDRDGNRILDEKEQEKMRQDLEEE). Coiled coils occupy residues 650 to 686 (NRIL…IVSS) and 700 to 740 (GWVS…MLER). The tract at residues 704-763 (GEEFYMLTRRVLQLETVLEGVVSQIDAVGSKLKMLERKGWLAPSPGVKEQAIWKHPQPAP) is required for homooligomerization. The segment at 759–805 (PQPAPAVTPDPWGVQGGQESEVPYKREEEALEERRLSRGEIPTLQRS) is disordered. Basic and acidic residues predominate over residues 780–796 (VPYKREEEALEERRLSR).

The protein belongs to the polycystin family. In terms of assembly, oligomer. Functional PKD2L1 homotetramer can be formed either through C-terminal trimerization followed by N-terminal dimerization of a fourth subunit with a subunit in the trimer or through dimerization followed by trimerization. Heterotetramer with either PKD1L1, PKD1L3 or PKD1; the heterotetrameric complex contains three PKD1L2 chains plus one chain from another family member. Interacts with PKD1L1, forming a ciliary calcium channel. Interacts with PKD1L3, forming a cation channel that is activated by low extracellular pH. Interacts with PKD1; this heteromeric functional cation channels is opened by hypo-osmotic stimulation. Interacts with RACK1; inhibits the channel activity possibly by impairing localization to the cell membrane. Post-translationally, palmitoylation is important for expression at the cell membrane and for channel activity. As to expression, detected in taste bud cells in fungiform papillae (at protein level). Ubiquitous. Expressed in adult heart, skeletal muscle, brain, spleen, testis, retina and liver. Isoform 4 appears to be expressed only in transformed lymphoblasts.

The protein resides in the cell projection. It localises to the cilium membrane. It is found in the cell membrane. Its subcellular location is the cytoplasmic vesicle. It catalyses the reaction Ca(2+)(in) = Ca(2+)(out). The enzyme catalyses Na(+)(in) = Na(+)(out). It carries out the reaction K(+)(in) = K(+)(out). The catalysed reaction is Mg(2+)(in) = Mg(2+)(out). Its activity is regulated as follows. The non-selective cation channel is gated following an off-response property by acid: gated open after the removal of acid stimulus, but not during acid application. Channel activity is inhibited by phosphatidylinositol-4,5-bisphosphate (PIP2). Non-selective cation channel activity is substantially increased when either the extracellular or intracellular calcium-ion concentration is raised. Regulation of non-selective cation channel activity by external calcium is bimodal, first sensitizing and subsequently inactivating the current. Functionally, homotetrameric, non-selective cation channel that is permeable to sodium, potassium, magnesium and calcium. Also forms functionnal heteromeric channels with PKD1, PKD1L1 and PKD1L3. Pore-forming subunit of a heterotetrameric, non-selective cation channel, formed by PKD1L2 and PKD1L3, that is permeable to sodium, potassium, magnesium and calcium and which may act as a sour taste receptor in gustatory cells; however, its contribution to sour taste perception is unclear in vivo and may be indirect. The homomeric and heteromeric channels formed by PKD1L2 and PKD1L3 are activated by low pH and Ca(2+), but opens only when the extracellular pH rises again and after the removal of acid stimulus. Pore-forming subunit of a calcium-permeant ion channel formed by PKD1L2 and PKD1L1 in primary cilia, where it controls cilium calcium concentration, without affecting cytoplasmic calcium concentration, and regulates sonic hedgehog/SHH signaling and GLI2 transcription. The PKD1L1:PKD2L1 complex channel is mechanosensitive only at high pressures and is highly temperature sensitive. Pore-forming subunit of a calcium-permeant ion channel formed by PKD1L2 and PKD1 that produces a transient increase in intracellular calcium concentration upon hypo-osmotic stimulation (200 mOsm). May play a role in the perception of carbonation taste. May play a role in the sensory perception of water, via a mechanism that activates the channel in response to dilution of salivary bicarbonate and changes in salivary pH. The sequence is that of Polycystin-2-like protein 1 from Homo sapiens (Human).